Consider the following 343-residue polypeptide: N-acetyl-gamma-glutamyl-phosphate reductase (343 aa).

Residue cysteine 149 is part of the active site.

This sequence belongs to the NAGSA dehydrogenase family. Type 1 subfamily.

The protein localises to the cytoplasm. The enzyme catalyses N-acetyl-L-glutamate 5-semialdehyde + phosphate + NADP(+) = N-acetyl-L-glutamyl 5-phosphate + NADPH + H(+). It functions in the pathway amino-acid biosynthesis; L-arginine biosynthesis; N(2)-acetyl-L-ornithine from L-glutamate: step 3/4. Functionally, catalyzes the NADPH-dependent reduction of N-acetyl-5-glutamyl phosphate to yield N-acetyl-L-glutamate 5-semialdehyde. The sequence is that of N-acetyl-gamma-glutamyl-phosphate reductase from Exiguobacterium sibiricum (strain DSM 17290 / CCUG 55495 / CIP 109462 / JCM 13490 / 255-15).